An 81-amino-acid chain; its full sequence is uncharacterized protein (81 aa).

This is an uncharacterized protein from Bacillus anthracis.